The primary structure comprises 85 residues: Large ribosomal subunit protein bL27 (85 aa).

Positions 1–21 are disordered; that stretch reads MAHKKAGGSTRNGRDSESKRL.

It belongs to the bacterial ribosomal protein bL27 family.

The protein is Large ribosomal subunit protein bL27 of Pseudomonas putida (strain W619).